The sequence spans 99 residues: Signal recognition particle 19 kDa protein (99 aa).

Belongs to the SRP19 family. As to quaternary structure, part of the signal recognition particle protein translocation system, which is composed of SRP and FtsY. Archaeal SRP consists of a 7S RNA molecule of 300 nucleotides and two protein subunits: SRP54 and SRP19.

The protein localises to the cytoplasm. Its function is as follows. Involved in targeting and insertion of nascent membrane proteins into the cytoplasmic membrane. Binds directly to 7S RNA and mediates binding of the 54 kDa subunit of the SRP. This is Signal recognition particle 19 kDa protein from Ignicoccus hospitalis (strain KIN4/I / DSM 18386 / JCM 14125).